The sequence spans 690 residues: Iron-sulfur clusters transporter ATM1, mitochondrial (690 aa).

A mitochondrion-targeting transit peptide spans M1–H26. Residues S27 to R110 are Mitochondrial matrix-facing. A helical transmembrane segment spans residues V111–F132. Residues V111–Q401 form the ABC transmembrane type-1 domain. Residues K133–G155 are Mitochondrial intermembrane-facing. Residues L156–F179 traverse the membrane as a helical segment. The Mitochondrial matrix portion of the chain corresponds to A180–V228. Residues L229 to Y252 traverse the membrane as a helical segment. Position 253 (Q253) is a topological domain, mitochondrial intermembrane. The helical transmembrane segment at F254–I274 threads the bilayer. Topologically, residues K275–A340 are mitochondrial matrix. Residues R280–R284 and N343–Q346 contribute to the glutathione site. Residues F341 to Y359 traverse the membrane as a helical segment. Residues M360–D374 lie on the Mitochondrial intermembrane side of the membrane. A helical transmembrane segment spans residues L375–Y396. A glutathione-binding site is contributed by G393. Residues R397–L690 lie on the Mitochondrial matrix side of the membrane. One can recognise an ABC transporter domain in the interval I436–T672. Residues Y445 and G469–K480 contribute to the ATP site.

This sequence belongs to the ABC transporter superfamily. ABCB family. Heavy Metal importer (TC 3.A.1.210) subfamily. Homodimer.

The protein localises to the mitochondrion inner membrane. Performs an essential function in the generation of cytoplasmic iron-sulfur proteins by mediating the ATP-dependent export of Fe/S cluster precursors synthesized by NFS1 and other mitochondrial proteins. Hydrolyzes ATP. Binds glutathione and may function by transporting a glutathione-conjugated iron-sulfur compound. In Saccharomyces cerevisiae (strain ATCC 204508 / S288c) (Baker's yeast), this protein is Iron-sulfur clusters transporter ATM1, mitochondrial.